Consider the following 369-residue polypeptide: Ferredoxin--NADP reductase 2 (369 aa).

The segment at 1-23 is disordered; the sequence is MDLSIPNPVADTTKQVDGGSPAG. The FAD site is built by aspartate 58, glutamine 66, tyrosine 71, valine 111, phenylalanine 146, aspartate 311, and threonine 352.

Belongs to the ferredoxin--NADP reductase type 2 family. In terms of assembly, homodimer. Requires FAD as cofactor.

It catalyses the reaction 2 reduced [2Fe-2S]-[ferredoxin] + NADP(+) + H(+) = 2 oxidized [2Fe-2S]-[ferredoxin] + NADPH. The polypeptide is Ferredoxin--NADP reductase 2 (Cupriavidus necator (strain ATCC 17699 / DSM 428 / KCTC 22496 / NCIMB 10442 / H16 / Stanier 337) (Ralstonia eutropha)).